We begin with the raw amino-acid sequence, 1129 residues long: DNA-directed RNA polymerase I subunit RPA2 (1129 aa).

The segment at 1061-1093 adopts a C4-type zinc-finger fold; sequence CHKCGSILAPLQRIVKRNETGGLSSQPDTCRLC.

It belongs to the RNA polymerase beta chain family. As to quaternary structure, component of the RNA polymerase I (Pol I) complex consisting of at least 13 subunits.

It is found in the nucleus. The protein resides in the nucleolus. It catalyses the reaction RNA(n) + a ribonucleoside 5'-triphosphate = RNA(n+1) + diphosphate. DNA-dependent RNA polymerase catalyzes the transcription of DNA into RNA using the four ribonucleoside triphosphates as substrates. Second largest core component of RNA polymerase I which synthesizes ribosomal RNA precursors. Proposed to contribute to the polymerase catalytic activity and forms the polymerase active center together with the largest subunit. Pol I is composed of mobile elements and RPA2 is part of the core element with the central large cleft and probably a clamp element that moves to open and close the cleft. The protein is DNA-directed RNA polymerase I subunit RPA2 of Drosophila melanogaster (Fruit fly).